The chain runs to 95 residues: Small ribosomal subunit protein uS19 (95 aa).

The segment at E73–K95 is disordered.

Belongs to the universal ribosomal protein uS19 family.

Protein S19 forms a complex with S13 that binds strongly to the 16S ribosomal RNA. This chain is Small ribosomal subunit protein uS19, found in Deinococcus geothermalis (strain DSM 11300 / CIP 105573 / AG-3a).